The sequence spans 320 residues: Ferrochelatase (320 aa).

Fe cation contacts are provided by histidine 194 and glutamate 275.

This sequence belongs to the ferrochelatase family.

The protein resides in the cytoplasm. The catalysed reaction is heme b + 2 H(+) = protoporphyrin IX + Fe(2+). It participates in porphyrin-containing compound metabolism; protoheme biosynthesis; protoheme from protoporphyrin-IX: step 1/1. Functionally, catalyzes the ferrous insertion into protoporphyrin IX. The protein is Ferrochelatase of Yersinia pestis bv. Antiqua (strain Antiqua).